The chain runs to 246 residues: MQALLFLLALLWPPEAGAEEIIGGVESKPHSRPYMAHLTITTKQGFTASCGGFLINPQFVMTAAHCKGREITVTLGAHDVSKKESTQQKIKVAKQIAHPSYSFYSNLHDIMLLKLQKKAKVTASVDVISLPSPSDFINPGKVCRAAGWGRTGVTEPTSDKLREVKLRIMTKAACKNYEHYDYNFQVCVGSPSKIRSAYKGDSGGPLVCAGVAHGIVSYGRIDAKPPAVFTRISPYVPWINLVIRGK.

The N-terminal stretch at 1-18 (MQALLFLLALLWPPEAGA) is a signal peptide. Positions 19–20 (EE) are cleaved as a propeptide — activation peptide. The Peptidase S1 domain maps to 21-244 (IIGGVESKPH…YVPWINLVIR (224 aa)). Cysteine 50 and cysteine 66 are disulfide-bonded. Catalysis depends on charge relay system residues histidine 65 and aspartate 109. Intrachain disulfides connect cysteine 143-cysteine 208 and cysteine 174-cysteine 187. The active-site Charge relay system is the serine 202.

Belongs to the peptidase S1 family. Granzyme subfamily.

In Meriones unguiculatus (Mongolian jird), this protein is Mast cell protease 1.